Consider the following 547-residue polypeptide: Riboflavin transporter RibJ (547 aa).

Residues 1 to 11 (MLPSFTRKPAD) lie on the Cytoplasmic side of the membrane. A helical membrane pass occupies residues 12–32 (HPIGYLVALSGLLMQLMSYGI). Residues 33 to 58 (DNSYSIFSEDMHNDPSLGFPSITAIS) are Extracellular-facing. A helical membrane pass occupies residues 59–79 (LGNSVSLGLSPAFGVLAGFCV). At 80 to 85 (DRLPPR) the chain is on the cytoplasmic side. The chain crosses the membrane as a helical span at residues 86–106 (FMMALSTILLFTGLWISSTLA). Over 107-108 (AN) the chain is Extracellular. A helical transmembrane segment spans residues 109–129 (IYVVTFTYCLFASIGTACMLS). At 130–144 (PGAAATSSWFNRYQG) the chain is on the cytoplasmic side. The chain crosses the membrane as a helical span at residues 145–165 (LAMGINFAGGGIGSAIIPPLA). Topologically, residues 166 to 175 (GKWVVAYGWR) are extracellular. A helical transmembrane segment spans residues 176 to 196 (KAFQLMSIFCAIGVLATALSA). Topologically, residues 197 to 344 (RRREPKRDDS…MFTLPFMGNF (148 aa)) are cytoplasmic. The segment at 198 to 293 (RREPKRDDSS…EGLDVTEQSQ (96 aa)) is disordered. The segment covering 244–255 (NEGKEDVREMGR) has biased composition (basic and acidic residues). Residues 345-365 (LCWFIYSWAFYSLIYAAVPYI) form a helical membrane-spanning segment. Residues 366–386 (SSMGKPGTVYAGVPPIPTDVA) lie on the Extracellular side of the membrane. Residues 387 to 407 (ATLFTFYGVFQVVGSVLVGWL) form a helical membrane-spanning segment. The Cytoplasmic portion of the chain corresponds to 408 to 412 (ASLVT). Residues 413–433 (AEFAYVFCATVGGIGCGLLAL) form a helical membrane-spanning segment. Residues 434-437 (GRSY) are Extracellular-facing. Residues 438-458 (VAFALLLCIIGFCMAGMFAVM) traverse the membrane as a helical segment. At 459–470 (PTLIATHLYGPN) the chain is on the cytoplasmic side. A helical membrane pass occupies residues 471 to 491 (LGFYFGAVFLAGVVGGFVAPP). At 492–505 (MQATIQLRNNGSYA) the chain is on the extracellular side. Residue Asn501 is glycosylated (N-linked (GlcNAc...) asparagine). A helical membrane pass occupies residues 506-526 (FVCVVMSVSMTLSALVCYATL). The Cytoplasmic segment spans residues 527–547 (WRSKRSGIVLAARKTKLVEIM).

This sequence belongs to the major facilitator superfamily. RibJ family.

The protein resides in the cell membrane. Its function is as follows. Transporter involved in riboflavin (vitamin B2) uptake. Also transports FMN and FAD. The chain is Riboflavin transporter RibJ from Trypanosoma brucei brucei (strain 927/4 GUTat10.1).